We begin with the raw amino-acid sequence, 395 residues long: GTPase Obg (395 aa).

In terms of domain architecture, Obg spans 1 to 159; sequence MQFVDEASII…RNLRFEMKVM (159 aa). The tract at residues 128–147 is disordered; it reads IHFKSSTNRAPRKTTPGTEG. Residues 160-333 form the OBG-type G domain; that stretch reads ADVGLLGVPN…LVQAAHRWLT (174 aa). GTP is bound by residues 166-173, 191-195, 213-216, 283-286, and 314-316; these read GVPNAGKS, FTTLV, DVPG, NKLD, and SAI. Mg(2+) contacts are provided by Ser173 and Thr193. The span at 340–368 shows a compositional bias: basic and acidic residues; sequence AEDETAFEHEREMRRRMEDEAVARAEARM. A disordered region spans residues 340–395; sequence AEDETAFEHEREMRRRMEDEAVARAEARMSRKRKPAEDDDDDFDEDDYDVEVEYAP. The segment covering 376–395 has biased composition (acidic residues); sequence EDDDDDFDEDDYDVEVEYAP.

Belongs to the TRAFAC class OBG-HflX-like GTPase superfamily. OBG GTPase family. In terms of assembly, monomer. The cofactor is Mg(2+).

The protein localises to the cytoplasm. Its function is as follows. An essential GTPase which binds GTP, GDP and possibly (p)ppGpp with moderate affinity, with high nucleotide exchange rates and a fairly low GTP hydrolysis rate. Plays a role in control of the cell cycle, stress response, ribosome biogenesis and in those bacteria that undergo differentiation, in morphogenesis control. The protein is GTPase Obg of Chromohalobacter salexigens (strain ATCC BAA-138 / DSM 3043 / CIP 106854 / NCIMB 13768 / 1H11).